The primary structure comprises 397 residues: Lymphoid enhancer-binding factor 1 (397 aa).

The tract at residues 1 to 60 is CTNNB1-binding; the sequence is MPQLSGGGGGGDPELCATDEMIPFKDEGDPQKEKIFAEISHPEEEGDLADIKSSLVNESE. Residue Lys-25 forms a Glycyl lysine isopeptide (Lys-Gly) (interchain with G-Cter in SUMO) linkage. The interval 38-102 is disordered; that stretch reads EISHPEEEGD…KHPDGGLYNK (65 aa). Basic and acidic residues predominate over residues 80-96; that stretch reads PYHDKAREHPDDGKHPD. Position 130 is a phosphoserine (Ser-130). Thr-153 carries the post-translational modification Phosphothreonine; by NLK. At Ser-164 the chain carries Phosphoserine; by NLK. Disordered regions lie at residues 164-190 and 266-296; these read SPGS…PAPE and VKQE…KRPH. Residue Lys-267 forms a Glycyl lysine isopeptide (Lys-Gly) (interchain with G-Cter in SUMO) linkage. Positions 267-294 are enriched in basic and acidic residues; it reads KQEHPHTDSDLMHVKPEHEQRKEQEPKR. Positions 297-365 form a DNA-binding region, HMG box; the sequence is IKKPLNAFML…LHMQLYPGWS (69 aa). The disordered stretch occupies residues 367-397; it reads RDNYGKKKKRKREKLQESTSGTGPRMTAAYI.

It belongs to the TCF/LEF family. As to quaternary structure, binds the armadillo repeat of CTNNB1 and forms a stable complex. Interacts with TLE1, PIASG, ALYREF/THOC4, EP300, MDFI and MDFIC. Interacts with DAZAP2. In terms of processing, phosphorylated at Thr-153 and/or Ser-164 by NLK. Phosphorylation by NLK at these sites represses LEF1-mediated transcriptional activation of target genes of the canonical Wnt signaling pathway.

It is found in the nucleus. Its function is as follows. Transcription factor that binds DNA in a sequence-specific manner. Participates in the Wnt signaling pathway. Activates transcription of target genes in the presence of CTNNB1 and EP300. PIASG antagonizes both Wnt-dependent and Wnt-independent activation by LEF1. TLE1, TLE2, TLE3 and TLE4 repress transactivation mediated by LEF1 and CTNNB1. Regulates T-cell receptor alpha enhancer function. Required for IL17A expressing gamma-delta T-cell maturation and development, via binding to regulator loci of BLK to modulate expression. Acts as a positive regulator of odontoblast differentiation during mesenchymal tooth germ formation, expression is repressed during the bell stage by MSX1-mediated inhibition of CTNNB1 signaling. May play a role in hair cell differentiation and follicle morphogenesis. This chain is Lymphoid enhancer-binding factor 1, found in Rattus norvegicus (Rat).